A 207-amino-acid polypeptide reads, in one-letter code: Ras-related protein Rab-7a (207 aa).

Thr-2 carries the post-translational modification N-acetylthreonine. 11 residues coordinate GTP: Ser-17, Gly-18, Val-19, Gly-20, Lys-21, Thr-22, Ser-23, Ser-34, Asn-35, Tyr-37, and Thr-40. Thr-22 is a Mg(2+) binding site. A Switch 1 motif is present at residues 28–41 (YVNKKFSNQYKATI). Residues Thr-40 and Asp-63 each coordinate Mg(2+). Position 66 (Gly-66) interacts with GTP. A Switch 2 motif is present at residues 67–82 (QERFQSLSVAFYRGAD). Ser-72 bears the Phosphoserine mark. Residues Asn-125, Lys-126, Asp-128, Ala-156, and Lys-157 each coordinate GTP. Residues Lys-191 and Lys-194 each participate in a glycyl lysine isopeptide (Lys-Gly) (interchain with G-Cter in ubiquitin) cross-link. Residues Cys-205 and Cys-207 are each lipidated (S-geranylgeranyl cysteine). Residue Cys-207 is modified to Cysteine methyl ester.

It belongs to the small GTPase superfamily. Rab family. As to quaternary structure, interacts with NTRK1/TRKA. Interacts with RILP. Interacts with PSMA7. Interacts with RNF115. Interacts with FYCO1. Interacts with the PIK3C3/VPS34-PIK3R4 complex. The GTP-bound form interacts with OSBPL1A. The GTP-bound form interacts with RAC1. Interacts with CLN3. Interacts with CHM, the substrate-binding subunit of the Rab geranylgeranyltransferase complex. Interacts with C9orf72. Does not interact with HPS4 and the BLOC-3 complex (heterodimer of HPS1 and HPS4). Interacts with CLN5. Interacts with PLEKHM1 (via N- and C-terminus). Interacts with PRPH; the interaction is direct. Interacts with VPS13A. The GDP-bound form interacts with RIMOC1. Interacts with the MON1A-CCZ1B complex and this interaction is enhanced in the presence of RIMOC1. Interacts with VPS39 and VPS41. Forms a ternary complex with LAMP2 and RUFY4; the interaction with LAMP2 is mediated by RUFY4 (via RUN and coiled coil domains). Mg(2+) serves as cofactor. Post-translationally, deubiquitination at Lys-191 and Lys-194 by USP32. In terms of processing, phosphorylated at Ser-72 by LRRK1; phosphorylation is dependent on protein kinase C (PKC) activation of LRRK1. Prenylated. Prenylation is required for association with cellular membranes.

Its subcellular location is the cytoplasmic vesicle. It is found in the phagosome membrane. The protein localises to the late endosome membrane. The protein resides in the lysosome membrane. It localises to the melanosome membrane. Its subcellular location is the autophagosome membrane. It is found in the lipid droplet. The protein localises to the endosome membrane. The protein resides in the mitochondrion membrane. It carries out the reaction GTP + H2O = GDP + phosphate + H(+). Regulated by guanine nucleotide exchange factors (GEFs) which promote the exchange of bound GDP for free GTP. Regulated by GTPase activating proteins (GAPs) which increase the GTP hydrolysis activity. Inhibited by GDP dissociation inhibitors (GDIs). Functionally, the small GTPases Rab are key regulators of intracellular membrane trafficking, from the formation of transport vesicles to their fusion with membranes. Rabs cycle between an inactive GDP-bound form and an active GTP-bound form that is able to recruit to membranes different sets of downstream effectors directly responsible for vesicle formation, movement, tethering and fusion. In its active state, RAB7A binds to a variety of effector proteins playing a key role in the regulation of endo-lysosomal trafficking. Governs early-to-late endosomal maturation, microtubule minus-end as well as plus-end directed endosomal migration and positioning, and endosome-lysosome transport through different protein-protein interaction cascades. Also plays a central role in growth-factor-mediated cell signaling, nutrient-transporter-mediated nutrient uptake, neurotrophin transport in the axons of neurons and lipid metabolism. Also involved in regulation of some specialized endosomal membrane trafficking, such as maturation of melanosomes, pathogen-induced phagosomes (or vacuoles) and autophagosomes. Plays a role in the maturation and acidification of phagosomes that engulf pathogens, such as S.aureus and Mycobacteria. Plays a role in the fusion of phagosomes with lysosomes. In concert with RAC1, plays a role in regulating the formation of RBs (ruffled borders) in osteoclasts. Controls the endosomal trafficking and neurite outgrowth signaling of NTRK1/TRKA. Regulates the endocytic trafficking of the EGF-EGFR complex by regulating its lysosomal degradation. Involved in the ADRB2-stimulated lipolysis through lipophagy, a cytosolic lipase-independent autophagic pathway. Required for the exosomal release of SDCBP, CD63 and syndecan. Required for vesicular trafficking and cell surface expression of ACE2. May play a role in PRPH neuronal intermediate filament assembly. This chain is Ras-related protein Rab-7a (RAB7A), found in Oryctolagus cuniculus (Rabbit).